A 505-amino-acid polypeptide reads, in one-letter code: Aspartyl/glutamyl-tRNA(Asn/Gln) amidotransferase subunit B (505 aa).

It belongs to the GatB/GatE family. GatB subfamily. Heterotrimer of A, B and C subunits.

The catalysed reaction is L-glutamyl-tRNA(Gln) + L-glutamine + ATP + H2O = L-glutaminyl-tRNA(Gln) + L-glutamate + ADP + phosphate + H(+). The enzyme catalyses L-aspartyl-tRNA(Asn) + L-glutamine + ATP + H2O = L-asparaginyl-tRNA(Asn) + L-glutamate + ADP + phosphate + 2 H(+). Functionally, allows the formation of correctly charged Asn-tRNA(Asn) or Gln-tRNA(Gln) through the transamidation of misacylated Asp-tRNA(Asn) or Glu-tRNA(Gln) in organisms which lack either or both of asparaginyl-tRNA or glutaminyl-tRNA synthetases. The reaction takes place in the presence of glutamine and ATP through an activated phospho-Asp-tRNA(Asn) or phospho-Glu-tRNA(Gln). The chain is Aspartyl/glutamyl-tRNA(Asn/Gln) amidotransferase subunit B from Corynebacterium jeikeium (strain K411).